The following is a 456-amino-acid chain: Methylenetetrahydrofolate--tRNA-(uracil-5-)-methyltransferase TrmFO (456 aa).

Residue 11–16 (GGGLAG) coordinates FAD.

It belongs to the MnmG family. TrmFO subfamily. Requires FAD as cofactor.

The protein resides in the cytoplasm. It carries out the reaction uridine(54) in tRNA + (6R)-5,10-methylene-5,6,7,8-tetrahydrofolate + NADH + H(+) = 5-methyluridine(54) in tRNA + (6S)-5,6,7,8-tetrahydrofolate + NAD(+). It catalyses the reaction uridine(54) in tRNA + (6R)-5,10-methylene-5,6,7,8-tetrahydrofolate + NADPH + H(+) = 5-methyluridine(54) in tRNA + (6S)-5,6,7,8-tetrahydrofolate + NADP(+). Catalyzes the folate-dependent formation of 5-methyl-uridine at position 54 (M-5-U54) in all tRNAs. The protein is Methylenetetrahydrofolate--tRNA-(uracil-5-)-methyltransferase TrmFO of Synechocystis sp. (strain ATCC 27184 / PCC 6803 / Kazusa).